A 150-amino-acid chain; its full sequence is Galectin-2 (150 aa).

Residues 9-141 (NQVKLQNDFK…FSSPVTVDVH (133 aa)) enclose the Galectin domain. His-51, Arg-55, Asn-64, Glu-75, and Arg-77 together coordinate a carbohydrate.

As to quaternary structure, homotetramer. Oligomerization is required for carbohydrate binding.

The protein localises to the secreted. Its subcellular location is the extracellular space. It localises to the extracellular matrix. The protein resides in the cell wall. It is found in the endomembrane system. Its function is as follows. Binds lactose. May play a role in fruiting body formation. Displays toxicity towards the nematode C.elegans by binding to a specific Gal-beta-1,4-Fuc-alpha-1,6 modification of N-glycan cores on C.elegans intestinal cells. The protein is Galectin-2 (Cgl2) of Coprinopsis cinerea (Inky cap fungus).